The chain runs to 650 residues: ATP-binding cassette sub-family G member 3 (650 aa).

The Cytoplasmic segment spans residues 1–387; the sequence is MASNNDPTVI…KNFKGFPWVT (387 aa). Residues 37-279 enclose the ABC transporter domain; sequence LSFHNISYQE…FRSAGYNYES (243 aa). An ABC transmembrane type-2 domain is found at 381-644; that stretch reads KGFPWVTVIQ…TITYVQLLQV (264 aa). Residues 388 to 408 traverse the membrane as a helical segment; the sequence is VIQAIITVILATAVGTAFRVL. Residues 409 to 420 are Extracellular-facing; that stretch reads KNDCIEVQMRAG. Residues 421-441 traverse the membrane as a helical segment; it reads LLYLLTIFQCITSVSAGELFV. At 442–469 the chain is on the cytoplasmic side; the sequence is IDRVRFLHEHTSGYYRVSSYFFGKLLAE. The helical transmembrane segment at 470-490 threads the bilayer; it reads LIPRRLLPSTVFSLITYVIAG. The Extracellular portion of the chain corresponds to 491-498; it reads VKMSMKCF. A helical membrane pass occupies residues 499–519; that stretch reads FTMICTIMVLAYSASSLPLSI. Residues 520 to 527 lie on the Cytoplasmic side of the membrane; it reads GAGENAVA. Residues 528–548 traverse the membrane as a helical segment; sequence VPTLLVTIYFVFMLFFSGLSL. Residues 549–623 are Extracellular-facing; that stretch reads YSGSFLPKLS…LSSWGFWENH (75 aa). A helical membrane pass occupies residues 624–644; it reads LALVCTMIILLTITYVQLLQV. Residues 645-648 lie on the Cytoplasmic side of the membrane; that stretch reads KNIR.

It belongs to the ABC transporter superfamily. ABCG family. Eye pigment precursor importer (TC 3.A.1.204) subfamily. May dimerize with another subunit to form a functional transporter. Highest levels of expression in thymus and spleen. Detected in lung and small intestine.

The protein resides in the membrane. This chain is ATP-binding cassette sub-family G member 3 (Abcg3), found in Mus musculus (Mouse).